The following is a 674-amino-acid chain: DNA ligase (674 aa).

Residues 42-46, 91-92, and Glu-121 contribute to the NAD(+) site; these read DNVYD and SM. Lys-123 acts as the N6-AMP-lysine intermediate in catalysis. 4 residues coordinate NAD(+): Arg-144, Glu-178, Lys-294, and Lys-318. The Zn(2+) site is built by Cys-412, Cys-415, Cys-430, and Cys-435. Residues 596–674 enclose the BRCT domain; sequence VKDSFVAGKT…ETELLANLKD (79 aa).

This sequence belongs to the NAD-dependent DNA ligase family. LigA subfamily. Mg(2+) is required as a cofactor. Mn(2+) serves as cofactor.

It catalyses the reaction NAD(+) + (deoxyribonucleotide)n-3'-hydroxyl + 5'-phospho-(deoxyribonucleotide)m = (deoxyribonucleotide)n+m + AMP + beta-nicotinamide D-nucleotide.. Functionally, DNA ligase that catalyzes the formation of phosphodiester linkages between 5'-phosphoryl and 3'-hydroxyl groups in double-stranded DNA using NAD as a coenzyme and as the energy source for the reaction. It is essential for DNA replication and repair of damaged DNA. In Lacticaseibacillus casei (strain BL23) (Lactobacillus casei), this protein is DNA ligase.